The sequence spans 462 residues: ATP synthase subunit beta (462 aa).

152 to 159 contacts ATP; the sequence is GGAGVGKT.

The protein belongs to the ATPase alpha/beta chains family. As to quaternary structure, F-type ATPases have 2 components, CF(1) - the catalytic core - and CF(0) - the membrane proton channel. CF(1) has five subunits: alpha(3), beta(3), gamma(1), delta(1), epsilon(1). CF(0) has three main subunits: a(1), b(2) and c(9-12). The alpha and beta chains form an alternating ring which encloses part of the gamma chain. CF(1) is attached to CF(0) by a central stalk formed by the gamma and epsilon chains, while a peripheral stalk is formed by the delta and b chains.

It is found in the cell inner membrane. It carries out the reaction ATP + H2O + 4 H(+)(in) = ADP + phosphate + 5 H(+)(out). Produces ATP from ADP in the presence of a proton gradient across the membrane. The catalytic sites are hosted primarily by the beta subunits. The protein is ATP synthase subunit beta of Tolumonas auensis (strain DSM 9187 / NBRC 110442 / TA 4).